A 124-amino-acid polypeptide reads, in one-letter code: Ribonuclease pancreatic A (124 aa).

Residues 1 to 24 (AESSAMKFERQHVDSGGSSSSNAN) form a disordered region. Residues K7 and R10 each coordinate substrate. The Proton acceptor role is filled by H12. Cystine bridges form between C26–C84, C40–C95, C58–C110, and C65–C72. Residues 41 to 45 (KPVNT), K66, and R85 contribute to the substrate site. H119 functions as the Proton donor in the catalytic mechanism.

The protein belongs to the pancreatic ribonuclease family. Pancreas.

The protein resides in the secreted. The catalysed reaction is an [RNA] containing cytidine + H2O = an [RNA]-3'-cytidine-3'-phosphate + a 5'-hydroxy-ribonucleotide-3'-[RNA].. It carries out the reaction an [RNA] containing uridine + H2O = an [RNA]-3'-uridine-3'-phosphate + a 5'-hydroxy-ribonucleotide-3'-[RNA].. The protein is Ribonuclease pancreatic A of Cavia porcellus (Guinea pig).